The primary structure comprises 127 residues: Large ribosomal subunit protein uL18 (127 aa).

It belongs to the universal ribosomal protein uL18 family. As to quaternary structure, part of the 50S ribosomal subunit; part of the 5S rRNA/L5/L18/L25 subcomplex. Contacts the 5S and 23S rRNAs.

Its function is as follows. This is one of the proteins that bind and probably mediate the attachment of the 5S RNA into the large ribosomal subunit, where it forms part of the central protuberance. This chain is Large ribosomal subunit protein uL18, found in Streptomyces griseus subsp. griseus (strain JCM 4626 / CBS 651.72 / NBRC 13350 / KCC S-0626 / ISP 5235).